Here is a 32-residue protein sequence, read N- to C-terminus: Protamine-1 (32 aa).

Positions 1 to 32 (PRRRRASSGRPVRRRRRPKMSRRRRRGGRRRR) are disordered.

In terms of tissue distribution, testis.

It is found in the nucleus. The protein resides in the chromosome. Protamines substitute for histones in the chromatin of sperm during the haploid phase of spermatogenesis. They compact sperm DNA into a highly condensed, stable and inactive complex. The protein is Protamine-1 of Esox lucius (Northern pike).